The chain runs to 351 residues: MAGSSFGRLFRITTWGESHGPALGVVIDGCPPGIPLAPEDIQRDLERRRPGKRLTSPRGEPDRVEILSGVFQGVTTGTPISLVIFNRDVRSGDYTELAEVYRPGHGDRTYEQKYGVRDWRGGGRSSGRETAARVAAGAVARKFLAGRGVEVKAYTVAFAGLHVDSFNRDEIDRNPFFCPDATAAAAMERRVEELRDAGDSCGGVVEVSARGCPAGLGEPVFDKLDARLAGALMSVGAVKGVEIGAGFAAAAMLGSENNDPLTPDGYASNNAGGVLAGISTGMDIVARAAVKPIPSISKPQQTVNTRGEPVTLSIKGRHDVSAIPRIVPVCEAMVLLVLADFMLHPAPVEKR.

Positions 39–60 (EDIQRDLERRRPGKRLTSPRGE) are disordered. Arg48 and Arg53 together coordinate NADP(+). FMN contacts are provided by residues 124–126 (RSS), Ala276, 291–295 (KPIPS), and Arg317.

The protein belongs to the chorismate synthase family. As to quaternary structure, homotetramer. FMNH2 is required as a cofactor.

It carries out the reaction 5-O-(1-carboxyvinyl)-3-phosphoshikimate = chorismate + phosphate. It functions in the pathway metabolic intermediate biosynthesis; chorismate biosynthesis; chorismate from D-erythrose 4-phosphate and phosphoenolpyruvate: step 7/7. In terms of biological role, catalyzes the anti-1,4-elimination of the C-3 phosphate and the C-6 proR hydrogen from 5-enolpyruvylshikimate-3-phosphate (EPSP) to yield chorismate, which is the branch point compound that serves as the starting substrate for the three terminal pathways of aromatic amino acid biosynthesis. This reaction introduces a second double bond into the aromatic ring system. This Syntrophobacter fumaroxidans (strain DSM 10017 / MPOB) protein is Chorismate synthase.